The following is a 539-amino-acid chain: Chaperonin GroEL 2 (539 aa).

Residues 29-32 (TLGP), 86-90 (DGTTT), glycine 413, 477-479 (NAA), and aspartate 493 each bind ATP. The disordered stretch occupies residues 519–539 (VVDKPEEEDSAAAGHGHGHSH).

It belongs to the chaperonin (HSP60) family. As to quaternary structure, forms a cylinder of 14 subunits composed of two heptameric rings stacked back-to-back. Interacts with the co-chaperonin GroES.

It localises to the cytoplasm. It catalyses the reaction ATP + H2O + a folded polypeptide = ADP + phosphate + an unfolded polypeptide.. In terms of biological role, together with its co-chaperonin GroES, plays an essential role in assisting protein folding. The GroEL-GroES system forms a nano-cage that allows encapsulation of the non-native substrate proteins and provides a physical environment optimized to promote and accelerate protein folding. The sequence is that of Chaperonin GroEL 2 from Saccharopolyspora erythraea (strain ATCC 11635 / DSM 40517 / JCM 4748 / NBRC 13426 / NCIMB 8594 / NRRL 2338).